The chain runs to 301 residues: Ethylmalonyl-CoA decarboxylase (301 aa).

Lys211 is subject to N6-acetyllysine; alternate. Position 211 is an N6-succinyllysine; alternate (Lys211). The residue at position 295 (Lys295) is an N6-succinyllysine.

Belongs to the enoyl-CoA hydratase/isomerase family.

It localises to the cytoplasm. The protein localises to the cytosol. It catalyses the reaction (2S)-ethylmalonyl-CoA + H(+) = butanoyl-CoA + CO2. The catalysed reaction is (S)-methylmalonyl-CoA + H(+) = propanoyl-CoA + CO2. The enzyme catalyses (2R)-ethylmalonyl-CoA + H(+) = butanoyl-CoA + CO2. In terms of biological role, decarboxylates ethylmalonyl-CoA, a potentially toxic metabolite, to form butyryl-CoA, suggesting it might be involved in metabolite proofreading. Acts preferentially on (S)-ethylmalonyl-CoA but also has some activity on the (R)-isomer. Also has methylmalonyl-CoA decarboxylase activity at lower level. The chain is Ethylmalonyl-CoA decarboxylase (ECHDC1) from Pongo abelii (Sumatran orangutan).